The sequence spans 378 residues: Glycerate kinase (378 aa).

Belongs to the glycerate kinase type-1 family.

The catalysed reaction is (R)-glycerate + ATP = (2R)-3-phosphoglycerate + ADP + H(+). In Haemophilus influenzae (strain ATCC 51907 / DSM 11121 / KW20 / Rd), this protein is Glycerate kinase (glxK).